The following is a 794-amino-acid chain: Phenylalanine--tRNA ligase beta subunit (794 aa).

The region spanning 40–158 is the tRNA-binding domain; sequence NSLNSELILG…LKKYIGSDVK (119 aa). Residues 402 to 477 form the B5 domain; that stretch reads KNKQSLEIKL…RLYSYDKIDE (76 aa). Residues Asp455, Asp461, Glu464, and Glu465 each contribute to the Mg(2+) site. An FDX-ACB domain is found at 702–794; sequence SKFQSSSRDL…NIKQMKVVIR (93 aa).

Belongs to the phenylalanyl-tRNA synthetase beta subunit family. Type 1 subfamily. As to quaternary structure, tetramer of two alpha and two beta subunits. It depends on Mg(2+) as a cofactor.

The protein resides in the cytoplasm. It catalyses the reaction tRNA(Phe) + L-phenylalanine + ATP = L-phenylalanyl-tRNA(Phe) + AMP + diphosphate + H(+). This is Phenylalanine--tRNA ligase beta subunit from Mycoplasma mycoides subsp. mycoides SC (strain CCUG 32753 / NCTC 10114 / PG1).